The following is a 190-amino-acid chain: dITP/XTP pyrophosphatase (190 aa).

Residue Thr7–Lys12 participates in substrate binding. Mg(2+)-binding residues include Glu39 and Asp68. Residue Asp68 is the Proton acceptor of the active site. Residues Thr69, Phe148 to Asp151, Lys171, and His176 to Arg177 each bind substrate.

The protein belongs to the HAM1 NTPase family. In terms of assembly, homodimer. The cofactor is Mg(2+).

The catalysed reaction is XTP + H2O = XMP + diphosphate + H(+). It carries out the reaction dITP + H2O = dIMP + diphosphate + H(+). It catalyses the reaction ITP + H2O = IMP + diphosphate + H(+). Its function is as follows. Pyrophosphatase that catalyzes the hydrolysis of nucleoside triphosphates to their monophosphate derivatives, with a high preference for the non-canonical purine nucleotides XTP (xanthosine triphosphate), dITP (deoxyinosine triphosphate) and ITP. Seems to function as a house-cleaning enzyme that removes non-canonical purine nucleotides from the nucleotide pool, thus preventing their incorporation into DNA/RNA and avoiding chromosomal lesions. The protein is dITP/XTP pyrophosphatase of Christiangramia forsetii (strain DSM 17595 / CGMCC 1.15422 / KT0803) (Gramella forsetii).